A 554-amino-acid chain; its full sequence is 3-(3-hydroxy-phenyl)propionate/3-hydroxycinnamic acid hydroxylase (554 aa).

Residues 17–46 and 285–295 each bind FAD; these read QVAIAGAGPVGLMMANYLGQMGIDVLVVEK and FRIDRVLLAGD.

The protein belongs to the PheA/TfdB FAD monooxygenase family. FAD serves as cofactor.

It catalyses the reaction 3-(3-hydroxyphenyl)propanoate + NADH + O2 + H(+) = 3-(2,3-dihydroxyphenyl)propanoate + NAD(+) + H2O. The catalysed reaction is (2E)-3-(3-hydroxyphenyl)prop-2-enoate + NADH + O2 + H(+) = (2E)-3-(2,3-dihydroxyphenyl)prop-2-enoate + NAD(+) + H2O. It participates in aromatic compound metabolism; 3-phenylpropanoate degradation. Its function is as follows. Catalyzes the insertion of one atom of molecular oxygen into position 2 of the phenyl ring of 3-(3-hydroxyphenyl)propionate (3-HPP) and hydroxycinnamic acid (3HCI). This chain is 3-(3-hydroxy-phenyl)propionate/3-hydroxycinnamic acid hydroxylase, found in Escherichia coli O157:H7.